The following is a 92-amino-acid chain: Small ribosomal subunit protein uS19 (92 aa).

The protein belongs to the universal ribosomal protein uS19 family.

In terms of biological role, protein S19 forms a complex with S13 that binds strongly to the 16S ribosomal RNA. The chain is Small ribosomal subunit protein uS19 from Prochlorococcus marinus (strain MIT 9312).